The following is a 272-amino-acid chain: Phosphoglycolate phosphatase (272 aa).

Asp19 (nucleophile) is an active-site residue. Mg(2+) is bound by residues Asp19, Asp21, and Asp182.

It belongs to the HAD-like hydrolase superfamily. CbbY/CbbZ/Gph/YieH family. It depends on Mg(2+) as a cofactor.

It carries out the reaction 2-phosphoglycolate + H2O = glycolate + phosphate. Its pathway is organic acid metabolism; glycolate biosynthesis; glycolate from 2-phosphoglycolate: step 1/1. Its function is as follows. Specifically catalyzes the dephosphorylation of 2-phosphoglycolate. Is involved in the dissimilation of the intracellular 2-phosphoglycolate formed during the DNA repair of 3'-phosphoglycolate ends, a major class of DNA lesions induced by oxidative stress. The protein is Phosphoglycolate phosphatase of Pseudomonas fluorescens (strain ATCC BAA-477 / NRRL B-23932 / Pf-5).